A 118-amino-acid chain; its full sequence is Large ribosomal subunit protein bL20 (118 aa).

The protein belongs to the bacterial ribosomal protein bL20 family.

Binds directly to 23S ribosomal RNA and is necessary for the in vitro assembly process of the 50S ribosomal subunit. It is not involved in the protein synthesizing functions of that subunit. The protein is Large ribosomal subunit protein bL20 of Rhodopirellula baltica (strain DSM 10527 / NCIMB 13988 / SH1).